We begin with the raw amino-acid sequence, 260 residues long: MAMTRSLEVKGQLVAGGKEPLICAPLVGRDEAAVLRELEVIVAKRPDLLEWRVDFYSGISDVERVVELAKEIRRSSAGIPVIFTRRSTREGGEPIGLSEDEVLSMYRAVARSGAVDFLDYELSSQPEHFEQAVALARETDTKLIASFHDFGKTPPVDEIVAKLVAMEEAGADIAKVAVMPQGLEDVLTLLQATLEAQKKIRLPVISMSMGAYGSLSRLFGWVFGSSVSFAVGQQASAPGQVPIEDLRTVLEVLQRSLKGE.

Residues 50–52 (EWR) and Arg-86 each bind 3-dehydroquinate. Residue His-148 is the Proton donor/acceptor of the active site. Catalysis depends on Lys-175, which acts as the Schiff-base intermediate with substrate. 3-dehydroquinate is bound by residues Arg-217, Ser-236, and Gln-240.

The protein belongs to the type-I 3-dehydroquinase family. In terms of assembly, homodimer.

It carries out the reaction 3-dehydroquinate = 3-dehydroshikimate + H2O. It functions in the pathway metabolic intermediate biosynthesis; chorismate biosynthesis; chorismate from D-erythrose 4-phosphate and phosphoenolpyruvate: step 3/7. In terms of biological role, involved in the third step of the chorismate pathway, which leads to the biosynthesis of aromatic amino acids. Catalyzes the cis-dehydration of 3-dehydroquinate (DHQ) and introduces the first double bond of the aromatic ring to yield 3-dehydroshikimate. The sequence is that of 3-dehydroquinate dehydratase from Aromatoleum aromaticum (strain DSM 19018 / LMG 30748 / EbN1) (Azoarcus sp. (strain EbN1)).